The primary structure comprises 215 residues: Adenylate kinase (215 aa).

10 to 15 (GAGKGT) contacts ATP. The tract at residues 30–59 (STGDMLRAAVKAGTELGLKAKSVMDAGNLV) is NMP. AMP contacts are provided by residues threonine 31, arginine 36, 57–59 (NLV), 85–88 (GFPR), and glutamine 92. The LID stretch occupies residues 122 to 159 (GRRVHEGSGRIYHTIFNPPKVEGVDDVTGESLVQRKDD). ATP is bound by residues arginine 123 and 132-133 (IY). 2 residues coordinate AMP: arginine 156 and arginine 167. Residue glycine 201 participates in ATP binding.

The protein belongs to the adenylate kinase family. Monomer.

Its subcellular location is the cytoplasm. It catalyses the reaction AMP + ATP = 2 ADP. The protein operates within purine metabolism; AMP biosynthesis via salvage pathway; AMP from ADP: step 1/1. Functionally, catalyzes the reversible transfer of the terminal phosphate group between ATP and AMP. Plays an important role in cellular energy homeostasis and in adenine nucleotide metabolism. The polypeptide is Adenylate kinase (Pseudomonas syringae pv. tomato (strain ATCC BAA-871 / DC3000)).